Consider the following 231-residue polypeptide: Large ribosomal subunit protein uL1 (231 aa).

This sequence belongs to the universal ribosomal protein uL1 family. Part of the 50S ribosomal subunit.

Functionally, binds directly to 23S rRNA. The L1 stalk is quite mobile in the ribosome, and is involved in E site tRNA release. Its function is as follows. Protein L1 is also a translational repressor protein, it controls the translation of the L11 operon by binding to its mRNA. This is Large ribosomal subunit protein uL1 from Mycoplasmopsis agalactiae (strain NCTC 10123 / CIP 59.7 / PG2) (Mycoplasma agalactiae).